A 91-amino-acid polypeptide reads, in one-letter code: Small ribosomal subunit protein uS19 (91 aa).

The protein belongs to the universal ribosomal protein uS19 family.

Its function is as follows. Protein S19 forms a complex with S13 that binds strongly to the 16S ribosomal RNA. The protein is Small ribosomal subunit protein uS19 of Erythrobacter litoralis (strain HTCC2594).